A 271-amino-acid polypeptide reads, in one-letter code: Glutamate racemase (271 aa).

Substrate contacts are provided by residues 10–11 (DS) and 42–43 (YG). The active-site Proton donor/acceptor is Cys-73. Substrate is bound at residue 74–75 (NT). The Proton donor/acceptor role is filled by Cys-183. Residue 184 to 185 (TH) participates in substrate binding.

Belongs to the aspartate/glutamate racemases family.

The catalysed reaction is L-glutamate = D-glutamate. It participates in cell wall biogenesis; peptidoglycan biosynthesis. Functionally, provides the (R)-glutamate required for cell wall biosynthesis. This Streptococcus thermophilus (strain CNRZ 1066) protein is Glutamate racemase.